We begin with the raw amino-acid sequence, 234 residues long: Response regulator RppA (234 aa).

A Response regulatory domain is found at 2–118 (RILLVEDETD…ELLARLRALQ (117 aa)). Aspartate 53 carries the post-translational modification 4-aspartylphosphate. The ompR/PhoB-type DNA-binding region spans 126-232 (PQILTLGNFS…VPGQGYRFTL (107 aa)).

As to quaternary structure, interacts with histidine kinase Hik2; may accept phosphate from Hik2.

Member of two-component regulatory system RppA/RppB, involved in the establishment of the appropriate stoichiometry between the 2 photosystems. It senses changes in the plastoquinone (PQ) redox poise. Another group shows this two-component pair, renamed NrsR/NrsS, controls the nickel-dependent expression of the nrsBACD operon; they suggest the photosystem-related activities seen earlier are due to the expression of NrsS (RppB) in the absence of its natural substrate NrsR (RppA). May accept phosphate from Hik2 in a possible Hik2/RppA two-component system. This Synechocystis sp. (strain ATCC 27184 / PCC 6803 / Kazusa) protein is Response regulator RppA.